Reading from the N-terminus, the 117-residue chain is Large ribosomal subunit protein bL20 (117 aa).

Belongs to the bacterial ribosomal protein bL20 family.

Functionally, binds directly to 23S ribosomal RNA and is necessary for the in vitro assembly process of the 50S ribosomal subunit. It is not involved in the protein synthesizing functions of that subunit. The protein is Large ribosomal subunit protein bL20 of Vibrio metschnikovii.